The primary structure comprises 419 residues: Voltage-gated potassium channel subunit beta-1 (419 aa).

The tract at residues 1 to 51 (MLAARTGAAGSQIAEESSKLRKQAAFSGGSKDRSPKKASENVKDSSLSPSG) is disordered. The span at 30–43 (SKDRSPKKASENVK) shows a compositional bias: basic and acidic residues. Residues Thr108, Trp109, Gln115, and Asp137 each coordinate NADP(+). Tyr142 functions as the Proton donor/acceptor in the catalytic mechanism. Asn210, Ser240, Arg241, Gln266, Trp295, Ser296, Pro297, Leu298, Ala299, Cys300, Lys306, Arg316, Gly375, Ser377, Gln381, Glu384, and Asn385 together coordinate NADP(+).

This sequence belongs to the shaker potassium channel beta subunit family. Homotetramer. Interaction with tetrameric potassium channel alpha subunits gives rise to a heterooctamer. Identified in potassium channel complexes containing KCNA1, KCNA2, KCNA4, KCNA5, KCNA6, KCNAB1 and KCNAB2. Part of a complex containing KCNA1, KCNA4 and LGI1; interaction with LGI1 inhibits down-regulation of KCNA1 channel activity. Interacts with the dimer formed by GNB1 and GNG2; this enhances KCNA1 binding. Interacts with SQSTM1. As to expression, detected in portal vein myocytes (at protein level).

The protein resides in the cytoplasm. The protein localises to the membrane. It is found in the cell membrane. The enzyme catalyses a primary alcohol + NADP(+) = an aldehyde + NADPH + H(+). The catalysed reaction is a secondary alcohol + NADP(+) = a ketone + NADPH + H(+). Functionally, regulatory subunit of the voltage-gated potassium (Kv) channels composed of pore-forming and potassium-conducting alpha subunits and of regulatory beta subunits. The beta-1/KCNAB1 cytoplasmic subunit mediates closure of delayed rectifier potassium channels by physically obstructing the pore via its N-terminal domain and increases the speed of channel closure for other family members. Promotes the inactivation of KCNA1, KCNA2, KCNA4, KCNA5 and KCNA6 alpha subunit-containing channels. Displays nicotinamide adenine dinucleotide phosphate (NADPH)-dependent aldoketoreductase activity by catalyzing the NADPH-dependent reduction of a variety of endogenous aldehydes and ketones. The binding of NADPH is required for efficient down-regulation of potassium channel activity. Oxidation of the bound NADPH restrains N-terminal domain from blocking the channel, thereby decreasing N-type inactivation of potassium channel activity. This chain is Voltage-gated potassium channel subunit beta-1 (KCNAB1), found in Oryctolagus cuniculus (Rabbit).